The chain runs to 205 residues: MANLKVMDQNGKDSGEVTLNDKVFGIEPNDNVVFEAIIRQRAGKRQGTSKVKNRSAVRGGGKKPWRQKGTGRARQGSIRAPQWRGGGTVFGPTPRSYAYTMPRKQRRLAIKSVLSQKLIDNDLIVLDKLTMSAPKTKELVSMLNSLNADGKVLIVSDDNNVQLSARNLAKVKVVPVNGLNVEDAVNYGKLILTQDAVKKIEEVLA.

Positions 43-97 (GKRQGTSKVKNRSAVRGGGKKPWRQKGTGRARQGSIRAPQWRGGGTVFGPTPRSY) are disordered. Over residues 51–71 (VKNRSAVRGGGKKPWRQKGTG) the composition is skewed to basic residues.

Belongs to the universal ribosomal protein uL4 family. As to quaternary structure, part of the 50S ribosomal subunit.

Its function is as follows. One of the primary rRNA binding proteins, this protein initially binds near the 5'-end of the 23S rRNA. It is important during the early stages of 50S assembly. It makes multiple contacts with different domains of the 23S rRNA in the assembled 50S subunit and ribosome. Functionally, forms part of the polypeptide exit tunnel. This chain is Large ribosomal subunit protein uL4, found in Lactobacillus acidophilus (strain ATCC 700396 / NCK56 / N2 / NCFM).